Consider the following 87-residue polypeptide: Kappa 1b-bungarotoxin (87 aa).

Residues 1-21 (MKTLLLTLVVVTIVCLDLGYT) form the signal peptide. 5 disulfide bridges follow: C24–C42, C35–C63, C48–C52, C67–C79, and C80–C85.

The protein belongs to the three-finger toxin family. Long-chain subfamily. Kappa-neurotoxin sub-subfamily. Homo- and heterodimer; non-covalently linked. In terms of tissue distribution, expressed by the venom gland.

Its subcellular location is the secreted. Postsynaptic neurotoxin that binds and inhibits neuronal nicotinic acetylcholine receptors (nAChR) with high affinity (IC(50)&lt;100 nM). Is a selective, and slowly reversible antagonist of alpha-3/CHRNA3-containing and some alpha-4/CHRNA4-containing AChRs. This is Kappa 1b-bungarotoxin from Bungarus candidus (Malayan krait).